Consider the following 497-residue polypeptide: Probable malate:quinone oxidoreductase (497 aa).

The protein belongs to the MQO family. FAD serves as cofactor.

It carries out the reaction (S)-malate + a quinone = a quinol + oxaloacetate. Its pathway is carbohydrate metabolism; tricarboxylic acid cycle; oxaloacetate from (S)-malate (quinone route): step 1/1. In Exiguobacterium sibiricum (strain DSM 17290 / CCUG 55495 / CIP 109462 / JCM 13490 / 255-15), this protein is Probable malate:quinone oxidoreductase.